The chain runs to 377 residues: Cell division protein FtsZ (377 aa).

The segment covering 1–16 (MDSIVDDAIDEAEDMG) has biased composition (acidic residues). Residues 1 to 33 (MDSIVDDAIDEAEDMGDGSAEVGGPTDINRSGT) are disordered. GTP is bound by residues 57–61 (GAGGN), 144–146 (GTG), Glu175, Arg179, and Asp222.

Belongs to the FtsZ family. In terms of assembly, homodimer. Polymerizes to form a dynamic ring structure in a strictly GTP-dependent manner. Interacts directly with several other division proteins.

Its subcellular location is the cytoplasm. Essential cell division protein that forms a contractile ring structure (Z ring) at the future cell division site. The regulation of the ring assembly controls the timing and the location of cell division. One of the functions of the FtsZ ring is to recruit other cell division proteins to the septum to produce a new cell wall between the dividing cells. Binds GTP and shows GTPase activity. This is Cell division protein FtsZ from Haloferax mediterranei (strain ATCC 33500 / DSM 1411 / JCM 8866 / NBRC 14739 / NCIMB 2177 / R-4) (Halobacterium mediterranei).